Here is a 220-residue protein sequence, read N- to C-terminus: Small ribosomal subunit protein uS2 (220 aa).

It belongs to the universal ribosomal protein uS2 family.

In Methanococcus maripaludis (strain C5 / ATCC BAA-1333), this protein is Small ribosomal subunit protein uS2.